The chain runs to 307 residues: Probable inactive peptidyl-prolyl cis-trans isomerase-like 6 (307 aa).

Residues 141–304 (FLDISIDLYP…QNCVITASGQ (164 aa)) form the PPIase cyclophilin-type domain.

The protein belongs to the cyclophilin-type PPIase family.

Functionally, probable inactive PPIase with no peptidyl-prolyl cis-trans isomerase activity. The protein is Probable inactive peptidyl-prolyl cis-trans isomerase-like 6 of Bos taurus (Bovine).